The chain runs to 309 residues: GTPase Era (309 aa).

The region spanning His16–Glu186 is the Era-type G domain. Positions Gly24–Ser31 are G1. Gly24–Ser31 serves as a coordination point for GTP. Residues Gln50 to Arg54 are G2. The tract at residues Asp71–Gly74 is G3. GTP is bound by residues Asp71 to Leu75 and Asn133 to Asp136. The G4 stretch occupies residues Asn133 to Asp136. Residues Leu164–Ala166 form a G5 region. Positions Leu217 to Pro294 constitute a KH type-2 domain.

It belongs to the TRAFAC class TrmE-Era-EngA-EngB-Septin-like GTPase superfamily. Era GTPase family. As to quaternary structure, monomer.

The protein resides in the cytoplasm. It localises to the cell membrane. An essential GTPase that binds both GDP and GTP, with rapid nucleotide exchange. Plays a role in 16S rRNA processing and 30S ribosomal subunit biogenesis and possibly also in cell cycle regulation and energy metabolism. The protein is GTPase Era of Deinococcus geothermalis (strain DSM 11300 / CIP 105573 / AG-3a).